The following is a 192-amino-acid chain: Orotate phosphoribosyltransferase (192 aa).

116–124 (EDIVTTGLS) contacts 5-phospho-alpha-D-ribose 1-diphosphate. 2 residues coordinate orotate: Thr120 and Arg148.

Belongs to the purine/pyrimidine phosphoribosyltransferase family. PyrE subfamily. Homodimer. Mg(2+) is required as a cofactor.

It catalyses the reaction orotidine 5'-phosphate + diphosphate = orotate + 5-phospho-alpha-D-ribose 1-diphosphate. It participates in pyrimidine metabolism; UMP biosynthesis via de novo pathway; UMP from orotate: step 1/2. Catalyzes the transfer of a ribosyl phosphate group from 5-phosphoribose 1-diphosphate to orotate, leading to the formation of orotidine monophosphate (OMP). The chain is Orotate phosphoribosyltransferase from Bartonella henselae (strain ATCC 49882 / DSM 28221 / CCUG 30454 / Houston 1) (Rochalimaea henselae).